The sequence spans 351 residues: MAAAPLKVCIVGSGNWGSAVAKIIGNNVKKLQKFASTVKMWVFEETVNGRKLTDIINNDHENVKYLPGHKLPENVVAMSNLSEAVQDADLLVFVIPHQFIHRICDEITGRVPKKALGITLIKGIDEGPEGLKLISDIIREKMGIDISVLMGANIANEVAAEKFCETTIGSKVMENGLLFKELLQTPNFRITVVDDADTVELCGALKNIVAVGAGFCDGLRCGDNTKAAVIRLGLMEMIAFARIFCKGQVSTATFLESCGVADLITTCYGGRNRRVAEAFARTGKTIEELEKEMLNGQKLQGPQTSAEVYRILKQKGLLDKFPLFTAVYQICYESRPVQEMLSCLQSHPEHT.

12-17 contacts NAD(+); that stretch reads GSGNWG. Lysine 122 is a substrate binding site. An NAD(+)-binding site is contributed by alanine 155. Lysine 206 functions as the Proton acceptor in the catalytic mechanism. Residues arginine 271, lysine 298, and glutamine 300 each contribute to the NAD(+) site. Position 271–272 (271–272) interacts with substrate; sequence RN.

Belongs to the NAD-dependent glycerol-3-phosphate dehydrogenase family. In terms of assembly, interacts with SCN5A. In terms of tissue distribution, most highly expressed in heart tissue, with lower levels in the skeletal muscle, kidney, lung and other organs.

It is found in the cytoplasm. The enzyme catalyses sn-glycerol 3-phosphate + NAD(+) = dihydroxyacetone phosphate + NADH + H(+). Functionally, plays a role in regulating cardiac sodium current; decreased enzymatic activity with resulting increased levels of glycerol 3-phosphate activating the DPD1L-dependent SCN5A phosphorylation pathway, may ultimately lead to decreased sodium current; cardiac sodium current may also be reduced due to alterations of NAD(H) balance induced by DPD1L. The sequence is that of Glycerol-3-phosphate dehydrogenase 1-like protein from Homo sapiens (Human).